Here is a 248-residue protein sequence, read N- to C-terminus: Phycocyanobilin:ferredoxin oxidoreductase (248 aa).

It belongs to the HY2 family.

The catalysed reaction is (2R,3Z)-phycocyanobilin + 4 oxidized [2Fe-2S]-[ferredoxin] = biliverdin IXalpha + 4 reduced [2Fe-2S]-[ferredoxin] + 4 H(+). In terms of biological role, catalyzes the four-electron reduction of biliverdin IX-alpha (2-electron reduction at both the A and D rings); the reaction proceeds via an isolatable 2-electron intermediate, 181,182-dihydrobiliverdin. The protein is Phycocyanobilin:ferredoxin oxidoreductase of Synechococcus sp. (strain ATCC 27144 / PCC 6301 / SAUG 1402/1) (Anacystis nidulans).